The sequence spans 431 residues: Enolase (431 aa).

Residue Q167 participates in (2R)-2-phosphoglycerate binding. E209 acts as the Proton donor in catalysis. Mg(2+)-binding residues include D246, E289, and D316. Residues K341, R370, S371, and K392 each contribute to the (2R)-2-phosphoglycerate site. K341 (proton acceptor) is an active-site residue.

Belongs to the enolase family. Component of the RNA degradosome, a multiprotein complex involved in RNA processing and mRNA degradation. It depends on Mg(2+) as a cofactor.

The protein localises to the cytoplasm. Its subcellular location is the secreted. It localises to the cell surface. It carries out the reaction (2R)-2-phosphoglycerate = phosphoenolpyruvate + H2O. It participates in carbohydrate degradation; glycolysis; pyruvate from D-glyceraldehyde 3-phosphate: step 4/5. Functionally, catalyzes the reversible conversion of 2-phosphoglycerate (2-PG) into phosphoenolpyruvate (PEP). It is essential for the degradation of carbohydrates via glycolysis. The sequence is that of Enolase from Marinobacter nauticus (strain ATCC 700491 / DSM 11845 / VT8) (Marinobacter aquaeolei).